The chain runs to 444 residues: Elongation factor 1-alpha (444 aa).

One can recognise a tr-type G domain in the interval 15–238 (KPHINLAVVG…DSFQPPQRPV (224 aa)). Residues 24 to 31 (GHVDNGKS) are G1. A GTP-binding site is contributed by 24 to 31 (GHVDNGKS). Serine 31 lines the Mg(2+) pocket. The G2 stretch occupies residues 80-84 (GVTIE). The segment at 101-104 (DLPG) is G3. Residues 101 to 105 (DLPGH) and 163 to 166 (NKMD) each bind GTP. Positions 163–166 (NKMD) are G4. A G5 region spans residues 202 to 204 (SAI).

The protein belongs to the TRAFAC class translation factor GTPase superfamily. Classic translation factor GTPase family. EF-Tu/EF-1A subfamily.

Its subcellular location is the cytoplasm. The catalysed reaction is GTP + H2O = GDP + phosphate + H(+). GTP hydrolase that promotes the GTP-dependent binding of aminoacyl-tRNA to the A-site of ribosomes during protein biosynthesis. In Pyrobaculum aerophilum (strain ATCC 51768 / DSM 7523 / JCM 9630 / CIP 104966 / NBRC 100827 / IM2), this protein is Elongation factor 1-alpha.